An 879-amino-acid polypeptide reads, in one-letter code: Probable phospholipid transport protein YdbH (879 aa).

The Cytoplasmic segment spans residues 1–6; sequence MLGKYK. A helical membrane pass occupies residues 7–29; sequence AVLALLLLIILVPLTLLMTLGLW. The Periplasmic portion of the chain corresponds to 30-879; the sequence is VPTLAGIWLP…PQGKECEEKQ (850 aa).

Interacts with the outer membrane lipoprotein YnbE.

The protein resides in the cell inner membrane. Its function is as follows. Involved in outer membrane lipid homeostasis. Interacts with the outer membrane lipoprotein YnbE to form a functional protein bridge connecting the inner and outer membranes of the cell. Likely transports phospholipids between the inner membrane and the outer membrane. It would provide a bridge-like structure that protects phospholipids as they travel across the periplasm. Functionally, tamB, YdbH and YhdP are redundant, but not equivalent, in performing an essential function for growth and maintaining lipid homeostasis in the outer membrane. Any of these three proteins is sufficient for growth. This is Probable phospholipid transport protein YdbH (ydbH) from Escherichia coli (strain K12).